The following is a 637-amino-acid chain: Palmitoyltransferase Hip14 (637 aa).

The Cytoplasmic segment spans residues 1–295; the sequence is MYQSACQAAT…SKLRHDKRLR (295 aa). ANK repeat units follow at residues 77 to 106, 111 to 140, 144 to 173, 177 to 207, and 212 to 242; these read ETVT…TVDA, LNAT…DPRI, EGCS…DPDL, GGMT…NPAM, and HGNT…SLDV. A helical membrane pass occupies residues 296–315; it reads WWSMVACPFTAFYLAGIVFT. Residues 316-318 lie on the Lumenal side of the membrane; sequence VNT. A helical membrane pass occupies residues 319–341; sequence LYIIKFFLLGCLYSIFHTIGKAL. Topologically, residues 342-345 are cytoplasmic; the sequence is FDEH. Residues 346-366 form a helical membrane-spanning segment; sequence LMALLPLSVYLATKAWFYVTW. At 367 to 373 the chain is on the lumenal side; sequence LMYIDDA. Residues 374 to 394 form a helical membrane-spanning segment; it reads VSFTATVCFLISSLLLWVCFL. Topologically, residues 395-472 are cytoplasmic; the sequence is KSWKGDPGII…VGNCIGLKNH (78 aa). A DHHC domain is found at 430-480; the sequence is SFCSGCLVRRPIRSKHCSVCDRCVARFDHHCPWVGNCIGLKNHSYFMGFLW. Residue cysteine 460 is the S-palmitoyl cysteine intermediate of the active site. Residues 473–493 form a helical membrane-spanning segment; the sequence is SYFMGFLWMLLIMCAWMLYGG. Residues 494–520 lie on the Lumenal side of the membrane; it reads SKYYVNQCNVRFDDFLGAMRAIGNCDA. Residues 521 to 541 form a helical membrane-spanning segment; sequence WVGWVMGNALLHMSWVILLTI. Residues 542–637 are Cytoplasmic-facing; it reads CQTYQVICLG…DGMAGDHQYV (96 aa).

This sequence belongs to the DHHC palmitoyltransferase family. AKR/ZDHHC17 subfamily. As to quaternary structure, interacts with dorsal-ventral patterning protein Sog. In terms of tissue distribution, in stage 13-15 embryos, expressed in the central nervous system. At the third instar larval stage, expressed in the ventral nerve cord and is enriched in the neuropil.

Its subcellular location is the golgi apparatus membrane. The protein localises to the presynaptic cell membrane. The enzyme catalyses L-cysteinyl-[protein] + hexadecanoyl-CoA = S-hexadecanoyl-L-cysteinyl-[protein] + CoA. Its function is as follows. Probable palmitoyltransferase which is required for photoreceptor synaptic transmission and for the correct expression and localization of palmitoylated protein Csp and synaptosomal-associated protein Snap25. Probably palmitoylates Csp. Probably also palmitoylates the dorsal-ventral patterning protein Sog and promotes its secretion and activity and the stabilization of the membrane-bound form. Required for synaptic vesicle exocytosis. In Drosophila melanogaster (Fruit fly), this protein is Palmitoyltransferase Hip14.